The primary structure comprises 356 residues: NADH-quinone oxidoreductase subunit H (356 aa).

The next 8 helical transmembrane spans lie at 18–38, 87–107, 120–140, 166–186, 205–225, 265–285, 292–312, and 333–353; these read IVMI…IAYI, GVFL…WAVI, VGIL…IMAG, IGFV…SAVV, ILNW…VSAL, AITT…LPPI, WVPG…LIAM, and FLPL…FAGI.

Belongs to the complex I subunit 1 family. In terms of assembly, NDH-1 is composed of 14 different subunits. Subunits NuoA, H, J, K, L, M, N constitute the membrane sector of the complex.

The protein resides in the cell inner membrane. The catalysed reaction is a quinone + NADH + 5 H(+)(in) = a quinol + NAD(+) + 4 H(+)(out). Its function is as follows. NDH-1 shuttles electrons from NADH, via FMN and iron-sulfur (Fe-S) centers, to quinones in the respiratory chain. The immediate electron acceptor for the enzyme in this species is believed to be ubiquinone. Couples the redox reaction to proton translocation (for every two electrons transferred, four hydrogen ions are translocated across the cytoplasmic membrane), and thus conserves the redox energy in a proton gradient. This subunit may bind ubiquinone. This is NADH-quinone oxidoreductase subunit H from Bradyrhizobium sp. (strain BTAi1 / ATCC BAA-1182).